Consider the following 285-residue polypeptide: Coagulation factor IX (285 aa).

Tyr23 carries the sulfotyrosine modification. N-linked (GlcNAc...) asparagine glycosylation occurs at Asn25. Thr27 is modified (phosphothreonine; alternate). O-linked (GalNAc...) threonine; alternate glycosylation is present at Thr27. Asn45 carries N-linked (GlcNAc...) asparagine glycosylation. Residue Thr47 is glycosylated (O-linked (GalNAc...) threonine). Residues 59-285 enclose the Peptidase S1 domain; the sequence is VVGGEDAKPG…YTKVSRYVNW (227 aa). Cys84 and Cys100 are disulfide-bonded. The Charge relay system role is filled by His99. Ca(2+) is bound by residues Asn115, Glu120, and Glu123. Residues Asn127 and Asn138 are each glycosylated (N-linked (GlcNAc...) asparagine). Residue Asp147 is the Charge relay system of the active site. Cystine bridges form between Cys214–Cys228 and Cys239–Cys267. The active-site Charge relay system is the Ser243.

This sequence belongs to the peptidase S1 family. Heterodimer of a light chain and a heavy chain; disulfide-linked. Interacts (inactive and activated) with F11 (activated) in calcium-dependent manner. Interacts with SERPINC1. In terms of processing, activated by factor XIa, which excises the activation peptide. The propeptide can also be removed by snake venom protease. Activated by coagulation factor VIIa-tissue factor (F7-F3) complex in calcium-dependent manner.

The protein resides in the secreted. The catalysed reaction is Selective cleavage of Arg-|-Ile bond in factor X to form factor Xa.. Functionally, factor IX is a vitamin K-dependent plasma protein that participates in the intrinsic pathway of blood coagulation by converting factor X to its active form in the presence of Ca(2+) ions, phospholipids, and factor VIIIa. In Cavia porcellus (Guinea pig), this protein is Coagulation factor IX (F9).